Reading from the N-terminus, the 630-residue chain is PR domain zinc finger protein 5 (630 aa).

Residues 8 to 124 (DRFSLKSSRV…TDTELLIGYL (117 aa)) enclose the SET domain. The C2H2-type 1 zinc finger occupies 167–190 (YACPQCESSFTSEDILAEHLQTLH). The C2H2-type 2; atypical zinc-finger motif lies at 199–221 (FKCKNCGKKFPVKQALQRHVLQC). The segment at 234-256 (FQCSVCNSSFSSASSFEQHQETC) adopts a C2H2-type 3; atypical zinc-finger fold. 13 C2H2-type zinc fingers span residues 262–287 (FVCK…ENVH), 295–317 (LICS…RKIH), 320–342 (FDCQ…MITH), 348–370 (YNCE…KVIH), 376–398 (YKCK…KKTH), 404–426 (FQCE…LLIH), 432–455 (FKCH…QVVH), 461–483 (YRCE…KKTH), 489–511 (KICP…IRSH), 517–539 (YQCP…IRTH), 545–567 (YKCS…KRTH), 573–595 (FQCD…KMTH), and 602–625 (AECQ…DNIH).

This sequence belongs to the class V-like SAM-binding methyltransferase superfamily. Interacts with EHMT2/G9A, GFI1 and HDAC1. As to expression, widely expressed with highest levels in colon and ovary. Tends to be silenced in breast, colorectal, gastric and liver cancer tissues.

It localises to the nucleus. Functionally, sequence-specific DNA-binding transcription factor. Represses transcription at least in part by recruitment of the histone methyltransferase EHMT2/G9A and histone deacetylases such as HDAC1. Regulates hematopoiesis-associated protein-coding and microRNA (miRNA) genes. May regulate the expression of proteins involved in extracellular matrix development and maintenance, including fibrillar collagens, such as COL4A1 and COL11A1, connective tissue components, such as HAPLN1, and molecules regulating cell migration and adhesion, including EDIL3 and TGFB2. May cause G2/M arrest and apoptosis in cancer cells. The protein is PR domain zinc finger protein 5 (PRDM5) of Homo sapiens (Human).